Reading from the N-terminus, the 377-residue chain is Anhydro-N-acetylmuramic acid kinase (377 aa).

ATP is bound at residue 14–21 (GTSLDGVD).

This sequence belongs to the anhydro-N-acetylmuramic acid kinase family.

It carries out the reaction 1,6-anhydro-N-acetyl-beta-muramate + ATP + H2O = N-acetyl-D-muramate 6-phosphate + ADP + H(+). It participates in amino-sugar metabolism; 1,6-anhydro-N-acetylmuramate degradation. It functions in the pathway cell wall biogenesis; peptidoglycan recycling. Catalyzes the specific phosphorylation of 1,6-anhydro-N-acetylmuramic acid (anhMurNAc) with the simultaneous cleavage of the 1,6-anhydro ring, generating MurNAc-6-P. Is required for the utilization of anhMurNAc either imported from the medium or derived from its own cell wall murein, and thus plays a role in cell wall recycling. This is Anhydro-N-acetylmuramic acid kinase from Pasteurella multocida (strain Pm70).